The chain runs to 172 residues: ATP synthase subunit b, chloroplastic (172 aa).

A helical transmembrane segment spans residues Ile15 to Val37.

Belongs to the ATPase B chain family. In terms of assembly, F-type ATPases have 2 components, F(1) - the catalytic core - and F(0) - the membrane proton channel. F(1) has five subunits: alpha(3), beta(3), gamma(1), delta(1), epsilon(1). F(0) has four main subunits: a(1), b(1), b'(1) and c(10-14). The alpha and beta chains form an alternating ring which encloses part of the gamma chain. F(1) is attached to F(0) by a central stalk formed by the gamma and epsilon chains, while a peripheral stalk is formed by the delta, b and b' chains.

Its subcellular location is the plastid. The protein localises to the chloroplast thylakoid membrane. In terms of biological role, f(1)F(0) ATP synthase produces ATP from ADP in the presence of a proton or sodium gradient. F-type ATPases consist of two structural domains, F(1) containing the extramembraneous catalytic core and F(0) containing the membrane proton channel, linked together by a central stalk and a peripheral stalk. During catalysis, ATP synthesis in the catalytic domain of F(1) is coupled via a rotary mechanism of the central stalk subunits to proton translocation. Functionally, component of the F(0) channel, it forms part of the peripheral stalk, linking F(1) to F(0). The chain is ATP synthase subunit b, chloroplastic from Pisum sativum (Garden pea).